A 271-amino-acid chain; its full sequence is Probable esterase D14L (271 aa).

Residue S96 is the Nucleophile of the active site. Residues D218 and H247 contribute to the active site.

The protein belongs to the AB hydrolase superfamily. Component of an intracellular receptor complex involved in the detection of the smoke compound karrikin. In terms of tissue distribution, expressed constitutively in all organs (e.g. roots, stems, leaves, panicles and embryos).

Its subcellular location is the nucleus. It localises to the cytoplasm. Functionally, may be involved in strigolactone signaling pathway. Essential for plant responses to karrikins, a class of butenolide compounds, structurally similar to strigolactones, released from burning vegetation that stimulate seed germination and enhance seedling photomorphogenesis. Mediates a specific perception of karrikin. Required for the establishment of symbiosis with the arbuscular mycorrhizal fungi (AMF) Rhizophagus irregularis and Gigaspora rosea. Karrikin binding induces a conformational change. This is Probable esterase D14L (D14L) from Oryza sativa subsp. japonica (Rice).